A 528-amino-acid chain; its full sequence is Poly(A) RNA polymerase GLD2 (528 aa).

Disordered stretches follow at residues 1 to 41 and 99 to 121; these read MYPN…QPQQ and RDQSPLISPASPSSSFQNRKRRS. 2 stretches are compositionally biased toward low complexity: residues 16–32 and 102–113; these read PCEQQQPPLEQSQEQPL and SPLISPASPSSS. Mg(2+)-binding residues include Asp-259 and Asp-261. The 54-residue stretch at 428–481 folds into the PAP-associated domain; that stretch reads LGDLLLGFLKYFAIEFDWSKDIISVREAKALPRSDDYEWRNKFICVEEPYDRTN.

It belongs to the DNA polymerase type-B-like family. GLD2 subfamily. As to quaternary structure, component of a complex at least composed of cpeb1, cpsf1, tent2/gld2, pabpc1/ePAB, parn and sympk. Following oocyte maturation, parn is expelled from the complex. Interacts with rbm9 and sympk. The cofactor is Mg(2+). Mn(2+) serves as cofactor.

It is found in the cytoplasm. It catalyses the reaction RNA(n) + ATP = RNA(n)-3'-adenine ribonucleotide + diphosphate. Functionally, cytoplasmic poly(A) RNA polymerase that adds successive AMP monomers to the 3'-end of specific RNAs, forming a poly(A) tail. In contrast to the canonical nuclear poly(A) RNA polymerase, it only adds poly(A) to selected cytoplasmic mRNAs during oocyte maturation. Plays a central role during oocyte maturation by mediating polyadenylation of dormant mRNAs, which contain 5'AAUAAA-3' sequence in their 3'-UTR. In immature oocytes, polyadenylation of poly(A) tails is counteracted by the ribonuclease parn. During maturation parn is excluded from the ribonucleoprotein complex, allowing poly(A) elongation and activation of mRNAs. May not play a role in replication-dependent histone mRNA degradation. This Xenopus tropicalis (Western clawed frog) protein is Poly(A) RNA polymerase GLD2 (tent2).